We begin with the raw amino-acid sequence, 619 residues long: Protein Atg16l2 (619 aa).

The tract at residues 57-78 (LQPEPNSVTPTTHQGPWEESEL) is disordered. Residues 60–70 (EPNSVTPTTHQ) show a composition bias toward polar residues. Residues 116–227 (AALGTLESEL…QARVSQELKK (112 aa)) adopt a coiled-coil conformation. WD repeat units follow at residues 334–373 (AHLS…LEAN), 378–417 (GAGG…SKET), 420–454 (GHKD…LGRA), 455–498 (YCSR…CTQV), 500–539 (PVQG…IRQV), 546–585 (KCGS…LESR), and 589–619 (PHCA…VLWQ).

It belongs to the WD repeat ATG16 family. Homooligomer. Heterooligomer with ATG16L1. Interacts with ATG5. Self-oligomerizes to form a 800-kDa complex composed of ATG12-ATG5 and ATG16L2. Interacts with RAB33B.

It localises to the cytoplasm. The protein localises to the cytosol. May play a role in regulating epithelial homeostasis in an ATG16L1-dependent manner. The protein is Protein Atg16l2 (ATG16L2) of Homo sapiens (Human).